A 244-amino-acid polypeptide reads, in one-letter code: 2-C-methyl-D-erythritol 4-phosphate cytidylyltransferase (244 aa).

The protein belongs to the IspD/TarI cytidylyltransferase family. IspD subfamily.

It catalyses the reaction 2-C-methyl-D-erythritol 4-phosphate + CTP + H(+) = 4-CDP-2-C-methyl-D-erythritol + diphosphate. Its pathway is isoprenoid biosynthesis; isopentenyl diphosphate biosynthesis via DXP pathway; isopentenyl diphosphate from 1-deoxy-D-xylulose 5-phosphate: step 2/6. Catalyzes the formation of 4-diphosphocytidyl-2-C-methyl-D-erythritol from CTP and 2-C-methyl-D-erythritol 4-phosphate (MEP). The polypeptide is 2-C-methyl-D-erythritol 4-phosphate cytidylyltransferase (Prosthecochloris aestuarii (strain DSM 271 / SK 413)).